Consider the following 218-residue polypeptide: Glutathione S-transferase Mu 1 (218 aa).

Residues 2-88 (PMILGYWDIR…YIARKHNLCG (87 aa)) enclose the GST N-terminal domain. Glutathione is bound by residues 7-8 (YW), 43-46 (RSQW), Lys-50, 59-60 (NL), and 72-73 (QS). Positions 90–208 (TEEEMIRVDI…KSSRFLPGPL (119 aa)) constitute a GST C-terminal domain. Tyr-116 contributes to the substrate binding site.

Belongs to the GST superfamily. Mu family. Homodimer.

It localises to the cytoplasm. It catalyses the reaction RX + glutathione = an S-substituted glutathione + a halide anion + H(+). It carries out the reaction prostaglandin A2 + glutathione = prostaglandin A2-S-(R)-glutathione. The catalysed reaction is prostaglandin J2 + glutathione = prostaglandin J2-S-(R)-glutathione. The enzyme catalyses prostaglandin J2 + glutathione = prostaglandin J2-S-(S)-glutathione. It catalyses the reaction prostaglandin A2 + glutathione = prostaglandin A2-S-(S)-glutathione. It carries out the reaction 11(S)-hydroxy-14(S),15(S)-epoxy-(5Z,8Z,12E)-eicosatrienoate + glutathione = (11S,15S)-dihydroxy-14(R)-S-glutathionyl-(5Z,8Z,12E)-eicosatrienoate. In terms of biological role, conjugation of reduced glutathione to a wide number of exogenous and endogenous hydrophobic electrophiles. Protects against the thiol-mediated metal-catalyzed oxidative inactivation of enzymes. Involved in the formation of glutathione conjugates of both prostaglandin A2 (PGA2) and prostaglandin J2 (PGJ2). Participates in the formation of novel hepoxilin regioisomers. The chain is Glutathione S-transferase Mu 1 (GSTM1) from Bos taurus (Bovine).